The primary structure comprises 207 residues: Ion-translocating oxidoreductase complex subunit B (207 aa).

Residues 1-29 (MLDLSIIAYLLIAICLIALIFGALLGYFS) are hydrophobic. The 59-residue stretch at 35–93 (EADPIVDQIDAILPQSQCGQCGYPGCKPYAEAIANGDQITKCVPGGQPLVVKIAELMGV) folds into the 4Fe-4S domain. [4Fe-4S] cluster is bound by residues Cys-52, Cys-55, Cys-60, Cys-76, Cys-116, Cys-119, Cys-122, Cys-126, Cys-146, Cys-149, Cys-152, and Cys-156. 2 4Fe-4S ferredoxin-type domains span residues 107 to 136 (KVALIHEDMCIGCTKCIQACPVDAIIGTNK) and 137 to 166 (AMHTVVADLCTGCELCVAPCPTNCIEMIKV).

Belongs to the 4Fe4S bacterial-type ferredoxin family. RnfB subfamily. As to quaternary structure, the complex is composed of six subunits: RnfA, RnfB, RnfC, RnfD, RnfE and RnfG. The cofactor is [4Fe-4S] cluster.

It localises to the cell inner membrane. Functionally, part of a membrane-bound complex that couples electron transfer with translocation of ions across the membrane. The chain is Ion-translocating oxidoreductase complex subunit B from Haemophilus ducreyi (strain 35000HP / ATCC 700724).